The following is a 489-amino-acid chain: MILTIVIIILTVIFVNKYLLNNGGKNDLRKVQGPFNLPLLGALYAFDKERFHKSFDKFYDKYKDFYFIKFGQHDCIVLNSPKLIKQVVIEQSDSVFERFHTPSIKRYAQGKSILGCSPDEWKKLRSFIVISFSKNKMGQQVLDKIFHTQYLKFENHIKKLIKSNNNIVTLEPEFKRLTISIIFNFQFGTDLEFTDPLIDSLLVCTEKIIASCQKASDLMPIFEIFTSYKDIDGVVKEMYALVKPFLEKYLKQHDRNNPKCALDHMINCILDQDEPKLITYEHLPHFLMDMFIGGTESTARTMDWFTLMMTNRKEMQDRIRTELLDVGIRLPVLVDKQKYPLLNASIKEIHRLRPIQPIIASRVVNDPIVLKHECSAKGESYTIPVGTLIIPNAHSFNFDPQYHKDPLTFNPNRYIGDNPEILHMTFDIGIRTCPFMSFAIDELFIIFSRLFQSFEFQPIDNTPISEEAFTINSIRPKQWSCQVIERDHK.

Residues 1 to 21 traverse the membrane as a helical segment; it reads MILTIVIIILTVIFVNKYLLN. Heme is bound at residue cysteine 433.

It belongs to the cytochrome P450 family. Requires heme as cofactor.

It is found in the membrane. This chain is Probable cytochrome P450 522A1 (cyp522A1), found in Dictyostelium discoideum (Social amoeba).